The primary structure comprises 299 residues: 4-hydroxy-tetrahydrodipicolinate synthase (299 aa).

Thr44 provides a ligand contact to pyruvate. Tyr133 acts as the Proton donor/acceptor in catalysis. The active-site Schiff-base intermediate with substrate is Lys162. Ile204 is a binding site for pyruvate.

The protein belongs to the DapA family. As to quaternary structure, homotetramer; dimer of dimers.

It is found in the cytoplasm. The catalysed reaction is L-aspartate 4-semialdehyde + pyruvate = (2S,4S)-4-hydroxy-2,3,4,5-tetrahydrodipicolinate + H2O + H(+). The protein operates within amino-acid biosynthesis; L-lysine biosynthesis via DAP pathway; (S)-tetrahydrodipicolinate from L-aspartate: step 3/4. Catalyzes the condensation of (S)-aspartate-beta-semialdehyde [(S)-ASA] and pyruvate to 4-hydroxy-tetrahydrodipicolinate (HTPA). The protein is 4-hydroxy-tetrahydrodipicolinate synthase of Thermus thermophilus (strain ATCC 27634 / DSM 579 / HB8).